An 86-amino-acid polypeptide reads, in one-letter code: Large ribosomal subunit protein bL31B (86 aa).

Belongs to the bacterial ribosomal protein bL31 family. Type B subfamily. As to quaternary structure, part of the 50S ribosomal subunit.

The chain is Large ribosomal subunit protein bL31B from Ralstonia pickettii (strain 12J).